Here is an 82-residue protein sequence, read N- to C-terminus: DNA-directed RNA polymerase subunit omega (82 aa).

It belongs to the RNA polymerase subunit omega family. In terms of assembly, in cyanobacteria the RNAP catalytic core is composed of 2 alpha, 1 beta, 1 beta', 1 gamma and 1 omega subunit. When a sigma factor is associated with the core the holoenzyme is formed, which can initiate transcription.

It catalyses the reaction RNA(n) + a ribonucleoside 5'-triphosphate = RNA(n+1) + diphosphate. Functionally, promotes RNA polymerase assembly. Latches the N- and C-terminal regions of the beta' subunit thereby facilitating its interaction with the beta and alpha subunits. In Trichodesmium erythraeum (strain IMS101), this protein is DNA-directed RNA polymerase subunit omega.